We begin with the raw amino-acid sequence, 171 residues long: uncharacterized protein (171 aa).

The N-terminal stretch at 1 to 17 (MLKRIIWILFLLGLTWG) is a signal peptide.

Part of the elfADCG-ycbUVF fimbrial operon, which promotes adhesion of bacteria to different abiotic surfaces. This is an uncharacterized protein from Escherichia coli (strain K12).